The primary structure comprises 165 residues: Nucleotide-binding protein CFF8240_1664 (165 aa).

The protein belongs to the YajQ family.

Functionally, nucleotide-binding protein. The sequence is that of Nucleotide-binding protein CFF8240_1664 from Campylobacter fetus subsp. fetus (strain 82-40).